The primary structure comprises 490 residues: Bifunctional protein HldE (490 aa).

Residues 1-330 are ribokinase; the sequence is MLDFEQLSPA…RKILPHAFLA (330 aa). 205–208 serves as a coordination point for ATP; the sequence is NRKE. The active site involves aspartate 275. Positions 358 to 490 are cytidylyltransferase; that stretch reads FTNGCFDILH…LVARAQNGKS (133 aa).

The protein in the N-terminal section; belongs to the carbohydrate kinase PfkB family. It in the C-terminal section; belongs to the cytidylyltransferase family. As to quaternary structure, homodimer.

The enzyme catalyses D-glycero-beta-D-manno-heptose 7-phosphate + ATP = D-glycero-beta-D-manno-heptose 1,7-bisphosphate + ADP + H(+). It carries out the reaction D-glycero-beta-D-manno-heptose 1-phosphate + ATP + H(+) = ADP-D-glycero-beta-D-manno-heptose + diphosphate. The protein operates within nucleotide-sugar biosynthesis; ADP-L-glycero-beta-D-manno-heptose biosynthesis; ADP-L-glycero-beta-D-manno-heptose from D-glycero-beta-D-manno-heptose 7-phosphate: step 1/4. Its pathway is nucleotide-sugar biosynthesis; ADP-L-glycero-beta-D-manno-heptose biosynthesis; ADP-L-glycero-beta-D-manno-heptose from D-glycero-beta-D-manno-heptose 7-phosphate: step 3/4. Its function is as follows. Catalyzes the phosphorylation of D-glycero-D-manno-heptose 7-phosphate at the C-1 position to selectively form D-glycero-beta-D-manno-heptose-1,7-bisphosphate. In terms of biological role, catalyzes the ADP transfer from ATP to D-glycero-beta-D-manno-heptose 1-phosphate, yielding ADP-D-glycero-beta-D-manno-heptose. In Rhodopseudomonas palustris (strain BisA53), this protein is Bifunctional protein HldE.